The following is a 475-amino-acid chain: MNSSYLNFKDKHILVVGDVMLDRYWHGGTSRISPEAPVQVVKVSSIEDRPGGAANVALGLAKLGVSVTLVGVVGNDENADVLARCLEDAGVICRFVRSETLPTITKLRVMSRHQQLIRLDFEEREDSLSQNEALAKVVEECLPKSDAVIFSDYAKGCLADVQSLIKLSNAAKVPSFVDPKGNDFSIYQGATLVKPNLLEFETIVGKCSSTKELEEKAKALREQFGWKALLVTRGEDGLILLSDDKPPFSLATAAKEVFDVTGAGDTVVAVLTAVYVTSKRFIDAVEYANQAAGYVVGKLGTASISAERLDAIMFQRSHNTNFGVLSPKDLLEQIKLAQMNGEKIVFTNGCFDILHPGHIAYMKQAKALGDRLIVAVNTDASVKRLKGEKRPINNLIHRMSVLEGVGSIDWVTWFDEDTPKEIIEFLTPDVLVKGGDYTIETIVGADHVLAHGGEVKVLTFVDGYSTTSIIEKANL.

The segment at 1 to 320 is ribokinase; that stretch reads MNSSYLNFKD…AIMFQRSHNT (320 aa). An ATP-binding site is contributed by 196-199; the sequence is NLLE. D265 is a catalytic residue. Positions 346–475 are cytidylyltransferase; the sequence is FTNGCFDILH…TTSIIEKANL (130 aa).

This sequence in the N-terminal section; belongs to the carbohydrate kinase PfkB family. It in the C-terminal section; belongs to the cytidylyltransferase family. As to quaternary structure, homodimer.

It carries out the reaction D-glycero-beta-D-manno-heptose 7-phosphate + ATP = D-glycero-beta-D-manno-heptose 1,7-bisphosphate + ADP + H(+). It catalyses the reaction D-glycero-beta-D-manno-heptose 1-phosphate + ATP + H(+) = ADP-D-glycero-beta-D-manno-heptose + diphosphate. It functions in the pathway nucleotide-sugar biosynthesis; ADP-L-glycero-beta-D-manno-heptose biosynthesis; ADP-L-glycero-beta-D-manno-heptose from D-glycero-beta-D-manno-heptose 7-phosphate: step 1/4. It participates in nucleotide-sugar biosynthesis; ADP-L-glycero-beta-D-manno-heptose biosynthesis; ADP-L-glycero-beta-D-manno-heptose from D-glycero-beta-D-manno-heptose 7-phosphate: step 3/4. Catalyzes the phosphorylation of D-glycero-D-manno-heptose 7-phosphate at the C-1 position to selectively form D-glycero-beta-D-manno-heptose-1,7-bisphosphate. Its function is as follows. Catalyzes the ADP transfer from ATP to D-glycero-beta-D-manno-heptose 1-phosphate, yielding ADP-D-glycero-beta-D-manno-heptose. The sequence is that of Bifunctional protein HldE from Marinomonas sp. (strain MWYL1).